A 150-amino-acid chain; its full sequence is Transcriptional repressor NrdR (150 aa).

The segment at 3–34 (CPYCQFEDTRVIDSRLASEGEQVRRRRECNRC) is a zinc-finger region. The region spanning 49–139 (PRIVKRDGTR…VYRSFEDVSA (91 aa)) is the ATP-cone domain.

Belongs to the NrdR family. Zn(2+) is required as a cofactor.

Its function is as follows. Negatively regulates transcription of bacterial ribonucleotide reductase nrd genes and operons by binding to NrdR-boxes. The sequence is that of Transcriptional repressor NrdR from Alkalilimnicola ehrlichii (strain ATCC BAA-1101 / DSM 17681 / MLHE-1).